We begin with the raw amino-acid sequence, 533 residues long: Tryptophan 7-halogenase KtzQ (533 aa).

Residues Gly-14, Thr-16, Ala-17, Ala-40, Glu-50, and Ala-51 each coordinate FAD. Residue Lys-80 is part of the active site. An L-tryptophan-binding site is contributed by Glu-359. Residues Thr-361 and Gly-362 each coordinate chloride. Leu-363 is an FAD binding site. Positions 456, 457, 463, and 467 each coordinate L-tryptophan.

This sequence belongs to the flavin-dependent halogenase family. Bacterial tryptophan halogenase subfamily.

The enzyme catalyses L-tryptophan + FADH2 + chloride + O2 = 7-chloro-L-tryptophan + FAD + 2 H2O. Its function is as follows. Involved in the biosynthesis of kutznerides, actinomycete-derived antifungal and antimicrobial cyclic hexadepsipeptides. Together with KtzR, catalyzes the regiospecific dichlorination of L-tryptophan (L-Trp) to produce 6,7-dichloro-L-tryptophan. KtzQ catalyzes the chlorination of L-Trp at C7 position to yield 7-chlorotryptophan. Can also use 6-chloro-L-tryptophan as substrate and form 6,7-dichloro-L-tryptophan, but has a preference for halogenation at the 7 position of unmodified L-Trp. Cannot use piperazic acid or gamma,delta-dehydropiperazic acid. The polypeptide is Tryptophan 7-halogenase KtzQ (Kutzneria sp. (strain 744)).